A 494-amino-acid polypeptide reads, in one-letter code: MGSTSSLYAAIDLGSNSFHMLVVREVAGSIQTLTRIKRKVRLAAGLNSENALSNEAMERGWQCLRLFAERLQDIPPSQIRVVATATLRLAVNAGDFIAKAQEILGCPVQVISGEEEARLIYQGVAHTTGGADQRLVVDIGGASTELVTGTGAQTTSLFSLSMGCVTWLERYFADRNLGQENFDAAEKAAREVLRPVADELRYHGWKVCVGASGTVQALQEIMMAQGMDERITLEKLQQLKQRAIHCGRLEELEIDGLTLERALVFPSGLAILIAIFTELNIQCMTLAGGALREGLVYGMLHLAVEQDIRSRTLRNIQRRFMIDIDQAQRVAKVAANFFDQVENEWHLEAISRDLLISACQLHEIGLSVDFKQAPQHAAYLVRNLDLPGFTPAQKKLLATLLLNQTNPIDLSSLHQQNAVPPRVAEQLCRLLRLAIIFASRRRDDLVPEMTLKANHELLTLTLPQGWLTQHPLGKEIIDQESQWQSYVHWPLEVH.

The protein belongs to the GppA/Ppx family. GppA subfamily.

It catalyses the reaction guanosine 3'-diphosphate 5'-triphosphate + H2O = guanosine 3',5'-bis(diphosphate) + phosphate + H(+). Its pathway is purine metabolism; ppGpp biosynthesis; ppGpp from GTP: step 2/2. Functionally, catalyzes the conversion of pppGpp to ppGpp. Guanosine pentaphosphate (pppGpp) is a cytoplasmic signaling molecule which together with ppGpp controls the 'stringent response', an adaptive process that allows bacteria to respond to amino acid starvation, resulting in the coordinated regulation of numerous cellular activities. This chain is Guanosine-5'-triphosphate,3'-diphosphate pyrophosphatase, found in Escherichia fergusonii (strain ATCC 35469 / DSM 13698 / CCUG 18766 / IAM 14443 / JCM 21226 / LMG 7866 / NBRC 102419 / NCTC 12128 / CDC 0568-73).